A 260-amino-acid polypeptide reads, in one-letter code: Putative ABC transporter ATP-binding protein PYRAB01300 (260 aa).

Residues 2 to 234 form the ABC transporter domain; sequence IEFKDVWFWY…DLRNFSLVEP (233 aa). Position 34-41 (34-41) interacts with ATP; sequence GPNGSGKT.

Belongs to the ABC transporter superfamily.

The protein resides in the cell membrane. Its function is as follows. Probably part of an ABC transporter complex. Responsible for energy coupling to the transport system. In Pyrococcus abyssi (strain GE5 / Orsay), this protein is Putative ABC transporter ATP-binding protein PYRAB01300.